The following is a 420-amino-acid chain: 3-phosphoshikimate 1-carboxyvinyltransferase (420 aa).

Residues 1-24 form a disordered region; it reads MTRTAKLTIIPPGRPLSGRAMPPG. 3 residues coordinate 3-phosphoshikimate: K26, S27, and R31. K26 contacts phosphoenolpyruvate. The phosphoenolpyruvate site is built by G97 and R125. 6 residues coordinate 3-phosphoshikimate: S170, S171, Q172, D297, N320, and K324. Q172 is a phosphoenolpyruvate binding site. The active-site Proton acceptor is the D297. Residues R328, R375, and K400 each coordinate phosphoenolpyruvate.

The protein belongs to the EPSP synthase family. Monomer.

The protein resides in the cytoplasm. The enzyme catalyses 3-phosphoshikimate + phosphoenolpyruvate = 5-O-(1-carboxyvinyl)-3-phosphoshikimate + phosphate. It participates in metabolic intermediate biosynthesis; chorismate biosynthesis; chorismate from D-erythrose 4-phosphate and phosphoenolpyruvate: step 6/7. Its function is as follows. Catalyzes the transfer of the enolpyruvyl moiety of phosphoenolpyruvate (PEP) to the 5-hydroxyl of shikimate-3-phosphate (S3P) to produce enolpyruvyl shikimate-3-phosphate and inorganic phosphate. In Rhizobium etli (strain CIAT 652), this protein is 3-phosphoshikimate 1-carboxyvinyltransferase.